A 258-amino-acid chain; its full sequence is UPF0246 protein Pnuc_0753 (258 aa).

The protein belongs to the UPF0246 family.

This chain is UPF0246 protein Pnuc_0753, found in Polynucleobacter asymbioticus (strain DSM 18221 / CIP 109841 / QLW-P1DMWA-1) (Polynucleobacter necessarius subsp. asymbioticus).